A 143-amino-acid chain; its full sequence is Large ribosomal subunit protein uL11 (143 aa).

It belongs to the universal ribosomal protein uL11 family. As to quaternary structure, part of the ribosomal stalk of the 50S ribosomal subunit. Interacts with L10 and the large rRNA to form the base of the stalk. L10 forms an elongated spine to which L12 dimers bind in a sequential fashion forming a multimeric L10(L12)X complex. In terms of processing, one or more lysine residues are methylated.

Its function is as follows. Forms part of the ribosomal stalk which helps the ribosome interact with GTP-bound translation factors. In Paracidovorax citrulli (strain AAC00-1) (Acidovorax citrulli), this protein is Large ribosomal subunit protein uL11.